Reading from the N-terminus, the 207-residue chain is Pyridoxine/pyridoxamine 5'-phosphate oxidase (207 aa).

Residues 53–58 (RMVLLK), 68–69 (YT), K75, and Q97 contribute to the FMN site. K58 lines the substrate pocket. 3 residues coordinate substrate: Y115, R119, and S123. Residues 132–133 (QS) and W177 contribute to the FMN site. 183–185 (RLH) provides a ligand contact to substrate. R187 is an FMN binding site.

Belongs to the pyridoxamine 5'-phosphate oxidase family. In terms of assembly, homodimer. FMN serves as cofactor.

The enzyme catalyses pyridoxamine 5'-phosphate + O2 + H2O = pyridoxal 5'-phosphate + H2O2 + NH4(+). It carries out the reaction pyridoxine 5'-phosphate + O2 = pyridoxal 5'-phosphate + H2O2. Its pathway is cofactor metabolism; pyridoxal 5'-phosphate salvage; pyridoxal 5'-phosphate from pyridoxamine 5'-phosphate: step 1/1. The protein operates within cofactor metabolism; pyridoxal 5'-phosphate salvage; pyridoxal 5'-phosphate from pyridoxine 5'-phosphate: step 1/1. Catalyzes the oxidation of either pyridoxine 5'-phosphate (PNP) or pyridoxamine 5'-phosphate (PMP) into pyridoxal 5'-phosphate (PLP). This Bartonella henselae (strain ATCC 49882 / DSM 28221 / CCUG 30454 / Houston 1) (Rochalimaea henselae) protein is Pyridoxine/pyridoxamine 5'-phosphate oxidase.